The chain runs to 148 residues: Aspartate 1-decarboxylase (148 aa).

The Schiff-base intermediate with substrate; via pyruvic acid role is filled by S25. Residue S25 is modified to Pyruvic acid (Ser). T57 provides a ligand contact to substrate. Residue Y58 is the Proton donor of the active site. 73-75 serves as a coordination point for substrate; sequence GAA.

The protein belongs to the PanD family. In terms of assembly, heterooctamer of four alpha and four beta subunits. It depends on pyruvate as a cofactor. In terms of processing, is synthesized initially as an inactive proenzyme, which is activated by self-cleavage at a specific serine bond to produce a beta-subunit with a hydroxyl group at its C-terminus and an alpha-subunit with a pyruvoyl group at its N-terminus.

It localises to the cytoplasm. It catalyses the reaction L-aspartate + H(+) = beta-alanine + CO2. It functions in the pathway cofactor biosynthesis; (R)-pantothenate biosynthesis; beta-alanine from L-aspartate: step 1/1. In terms of biological role, catalyzes the pyruvoyl-dependent decarboxylation of aspartate to produce beta-alanine. In Rhodococcus opacus (strain B4), this protein is Aspartate 1-decarboxylase.